The chain runs to 513 residues: Na(+)/H(+) antiporter NhaB (513 aa).

The next 11 helical transmembrane spans lie at 23 to 43 (LALI…PFVA), 52 to 72 (IFTL…LLAI), 97 to 117 (LLLM…LFIF), 144 to 164 (FLDA…FYGI), 202 to 222 (LMMH…VGEP), 238 to 258 (FFLR…LTCL), 303 to 323 (AIIG…VGLI), 348 to 368 (TESL…AVII), 391 to 411 (LFYI…VGTI), 447 to 467 (ATPN…APLI), and 475 to 495 (VWMA…CVEF).

The protein belongs to the NhaB Na(+)/H(+) (TC 2.A.34) antiporter family.

It localises to the cell inner membrane. The catalysed reaction is 2 Na(+)(in) + 3 H(+)(out) = 2 Na(+)(out) + 3 H(+)(in). Functionally, na(+)/H(+) antiporter that extrudes sodium in exchange for external protons. This is Na(+)/H(+) antiporter NhaB from Escherichia coli (strain SMS-3-5 / SECEC).